A 429-amino-acid polypeptide reads, in one-letter code: UDP-N-acetylglucosamine 1-carboxyvinyltransferase (429 aa).

Residue lysine 22–asparagine 23 participates in phosphoenolpyruvate binding. UDP-N-acetyl-alpha-D-glucosamine is bound at residue arginine 93. Cysteine 117 (proton donor) is an active-site residue. The residue at position 117 (cysteine 117) is a 2-(S-cysteinyl)pyruvic acid O-phosphothioketal. Residues arginine 122–leucine 126, aspartate 307, and valine 329 each bind UDP-N-acetyl-alpha-D-glucosamine.

Belongs to the EPSP synthase family. MurA subfamily.

It localises to the cytoplasm. The enzyme catalyses phosphoenolpyruvate + UDP-N-acetyl-alpha-D-glucosamine = UDP-N-acetyl-3-O-(1-carboxyvinyl)-alpha-D-glucosamine + phosphate. The protein operates within cell wall biogenesis; peptidoglycan biosynthesis. Its function is as follows. Cell wall formation. Adds enolpyruvyl to UDP-N-acetylglucosamine. The sequence is that of UDP-N-acetylglucosamine 1-carboxyvinyltransferase from Chloroherpeton thalassium (strain ATCC 35110 / GB-78).